The following is a 633-amino-acid chain: Peptidoglycan D,D-transpeptidase MrdA (633 aa).

A helical transmembrane segment spans residues 22–42 (LVAFLGILLLTGVLIANLYNL). Serine 330 (acyl-ester intermediate) is an active-site residue.

Belongs to the transpeptidase family. MrdA subfamily.

Its subcellular location is the cell inner membrane. The enzyme catalyses Preferential cleavage: (Ac)2-L-Lys-D-Ala-|-D-Ala. Also transpeptidation of peptidyl-alanyl moieties that are N-acyl substituents of D-alanine.. The protein operates within cell wall biogenesis; peptidoglycan biosynthesis. In terms of biological role, catalyzes cross-linking of the peptidoglycan cell wall. The protein is Peptidoglycan D,D-transpeptidase MrdA of Escherichia coli O157:H7.